Consider the following 998-residue polypeptide: MVLISDAFGLEISPNGILVGHGDQAVLYSSEPKVELPVQLREGKVRGFAWSSLRKSQRLLLLYSENEYSLIRCTTSSENDLFQLVYEGETRDWINAALFLEDENESEDRKRFVLHTSHSALLYMEYDLTSNADCTVLELARCTDSSILYYTKLHGSSFNKLAIISGNAFGELLVWQTQFPTESDPKSVMKTYPLLLRIEAHNGVIHSIEFDLQSQLLVTTSDDRSVKFWNIQKSGDWTTAEIKPMFSCYGHSSRVMCVVILKIDDRTFVASGGEDSYVCIWSSSGELILKRRQQFGAPIWRLGFSQDAEILYSTSSTGNLVGQNLKEVLNRPKIESTILSSLGDANEFVRNLKFVNNEIIVGLSSLNRLYYTRISPDSSHENKWLMVNDFPSYKRTVLEVFDDIIATCGHRRITLHRYNTNTNDFEQLFDGIRMKGTIRSFQFLSRDRYLVSDNLGYCLLLQTHQLHIESHIALFNNREPWITAALLISEQYLLLGNREGHVMLYCRSSASDDFQLKDSIRYLHGKMGSNFFKLLSLNADNAHVMSGGHEAFLKYLSVRFSDSTLRVSQREGIPLAWVEASPSDDLILGFNDNHIVAWSRRNDILLQLACGGGHRCWDFRLSDGDSQLSIAYVKQKRVYFYRNSLYNAVDNRLKDIEPNNWHVRNCNTLRLITPRNQSDPFILSAGDDNIIKVTQVTNDSLSQRAEMHSHISTVRSLQAIPYKSNGGDSSTWLVFSVGGRSQLCISQLSIDASNKCWISEISSHTLHNVAASKTSTIEARLMAIDVVQHSDGDLFSIYVAGGDGNISHYIWELETPNQLDLKHFVDIQRCPLGIQWIASKGMLLVSTTNGEVYGFDRTLETTYFQLQLHVTGINTIDIYVDRHLLHILSGGDDESIKYTVLNLNNNNVEQKIEYLGLHNAQVNALAIHCPTKSVAASELFAYTCSIDRQIYRIDLSTHKYKRVGYTCIADVKGMLLDEHQRMYFYGCGLQTMSISNIL.

WD repeat units lie at residues 148–185, 200–239, 250–291, 294–333, 476–515, 527–566, 567–608, 664–704, 779–821, 826–865, and 868–911; these read LYYT…ESDP, AHNG…DWTT, GHSS…ILKR, QFGA…NRPK, NNRE…DDFQ, MGSN…STLR, VSQR…LLQL, RNCN…LSQR, ARLM…QLDL, DIQR…TYFQ, and LHVT…VEQK.

The protein belongs to the WD repeat WDR6 family. Interacts with Trm7-34.

The protein localises to the cytoplasm. Functionally, together with methyltransferase Trm7-34, methylates the 2'-O-ribose of nucleotides at position 34 of the anticodon loop of substrate tRNAs. In Drosophila melanogaster (Fruit fly), this protein is tRNA (34-2'-O)-methyltransferase regulator WDR6.